We begin with the raw amino-acid sequence, 98 residues long: NADH-ubiquinone oxidoreductase chain 4L (98 aa).

The next 3 helical transmembrane spans lie at 1-21 (MSLV…GLLM), 29-49 (SLLC…IMIL), and 61-81 (IILL…LVMV).

This sequence belongs to the complex I subunit 4L family. In terms of assembly, core subunit of respiratory chain NADH dehydrogenase (Complex I) which is composed of 45 different subunits.

It localises to the mitochondrion inner membrane. It catalyses the reaction a ubiquinone + NADH + 5 H(+)(in) = a ubiquinol + NAD(+) + 4 H(+)(out). Core subunit of the mitochondrial membrane respiratory chain NADH dehydrogenase (Complex I) which catalyzes electron transfer from NADH through the respiratory chain, using ubiquinone as an electron acceptor. Part of the enzyme membrane arm which is embedded in the lipid bilayer and involved in proton translocation. The protein is NADH-ubiquinone oxidoreductase chain 4L (MT-ND4L) of Mogera wogura (Japanese mole).